A 443-amino-acid polypeptide reads, in one-letter code: Probable glycine dehydrogenase (decarboxylating) subunit 1 (443 aa).

It belongs to the GcvP family. N-terminal subunit subfamily. The glycine cleavage system is composed of four proteins: P, T, L and H. In this organism, the P 'protein' is a heterodimer of two subunits.

It catalyses the reaction N(6)-[(R)-lipoyl]-L-lysyl-[glycine-cleavage complex H protein] + glycine + H(+) = N(6)-[(R)-S(8)-aminomethyldihydrolipoyl]-L-lysyl-[glycine-cleavage complex H protein] + CO2. Functionally, the glycine cleavage system catalyzes the degradation of glycine. The P protein binds the alpha-amino group of glycine through its pyridoxal phosphate cofactor; CO(2) is released and the remaining methylamine moiety is then transferred to the lipoamide cofactor of the H protein. The protein is Probable glycine dehydrogenase (decarboxylating) subunit 1 of Desulfovibrio desulfuricans (strain ATCC 27774 / DSM 6949 / MB).